Reading from the N-terminus, the 341-residue chain is MAPIEILKFPISSPGDISPLKKLQDAGYDPSNILAVVGKTEGNGCVNDFSRTLASAVWEPRIPSDAVTIFSGGTEGVLSPHVTFFLRSPGDKETGLSAAVGHTRRFEPHEIGTDEQAQQVATTTSSLIEQMGVTPDQVHMVLIKCPLLTSEKLETIRALGRVPVTTDTYESMARSRYASAVGIAAAVGEIQHTRIPEAVSKAGTWSAKASCSSGAELEDCHILVLASTSAQGSRLHAVSRPMADAMDAASILALMELAKKDGGKIVQVFAKAEADPSGHVREWRHTMNTDSDIHSTRHARAAVGGLIAGLVSDAEIYVSGGAEGQGPSGGGSLCLVYETSI.

Residues 1–90 form an RU A region; sequence MAPIEILKFP…HVTFFLRSPG (90 aa). Substrate contacts are provided by residues arginine 51 and 71–72; that span reads SG. Residues 95–229 form an RU B region; the sequence is GLSAAVGHTR…CHILVLASTS (135 aa). Residue lysine 144 is part of the active site. Substrate is bound by residues arginine 176 and 212-213; that span reads SS. Serine 212 functions as the Nucleophile in the catalytic mechanism. An RU C region spans residues 235–341; that stretch reads LHAVSRPMAD…SLCLVYETSI (107 aa). A Mg(2+)-binding site is contributed by glutamate 273. Substrate is bound by residues arginine 300 and 319–320; that span reads SG. Residues alanine 322, glutamine 325, glycine 326, proline 327, and glycine 330 each coordinate Mg(2+).

This sequence belongs to the cyclic amide hydrolase (CyAH) family. Homotetramer.

It carries out the reaction cyanurate + H2O = 1-carboxybiuret + H(+). It participates in xenobiotic degradation; atrazine degradation; biuret from cyanurate: step 1/1. With respect to regulation, inhibited by barbituric acid. Responsible for the hydrolysis of cyanuric acid, an intermediate formed during catabolism of s-triazine based compounds in herbicides such as atrazine and polymers such as melamine. Catalyzes the hydrolytic opening of the s-triazine ring of cyanuric acid (2,4,6-trihydroxy-s-triazine) to yield carbon dioxide and carboxybiuret, which spontaneously decarboxylates to biuret. Only active on cyanuric acid and N-methylisocyanuric acid. This chain is Cyanuric acid amidohydrolase, found in Sarocladium sp.